A 427-amino-acid polypeptide reads, in one-letter code: MSFFALGVNHQTASVELREQIAFNAERLSNLLAEQRHHESLKDLVVVSTCNRTEVYAMAEDAESLLKWLADANNIDVKQLIHHVYRYENAQAITHLMRVASGLDSLMLGEPQILGQVKSALALSKEAQTVSPELNSVFEYAFYAAKRVRSETAVGSHAVSMGYAVAQLALQVFSKPEKLTVMVVAAGEMNSLVAKHLAEMGVAKMIICNRSRERADQLAQEIAHQVEVEIIDFSDLAENLYRADVVSSCTGSLHQVIAYADVKTALKKRRYQQMLMVDLAVPRDIDPKVESLDGVYLYGVDDLQSVIDENLAQRRQAAVEAEVMVNQLATQLITHQKVKEAGSTIHAYRQHSEEISQRELTHALEALHHGGNPEQVLQQFAHRLTQKLIHPTSMLLREAAKAESPDYFEWLQQHLQDVFDHERKPKR.

Residues 49 to 52, Ser-105, 110 to 112, and Gln-116 contribute to the substrate site; these read TCNR and EPQ. The active-site Nucleophile is Cys-50. NADP(+) is bound at residue 185 to 190; sequence AAGEMN.

The protein belongs to the glutamyl-tRNA reductase family. Homodimer.

It catalyses the reaction (S)-4-amino-5-oxopentanoate + tRNA(Glu) + NADP(+) = L-glutamyl-tRNA(Glu) + NADPH + H(+). It participates in porphyrin-containing compound metabolism; protoporphyrin-IX biosynthesis; 5-aminolevulinate from L-glutamyl-tRNA(Glu): step 1/2. Its function is as follows. Catalyzes the NADPH-dependent reduction of glutamyl-tRNA(Glu) to glutamate 1-semialdehyde (GSA). The sequence is that of Glutamyl-tRNA reductase from Acinetobacter baumannii (strain AB307-0294).